A 183-amino-acid polypeptide reads, in one-letter code: Small ribosomal subunit protein uS5 (183 aa).

An S5 DRBM domain is found at 11–71 (FLERVVGINR…EEAKKSFFRV (61 aa)).

It belongs to the universal ribosomal protein uS5 family. In terms of assembly, part of the 30S ribosomal subunit. Contacts proteins S4 and S8.

Functionally, with S4 and S12 plays an important role in translational accuracy. Located at the back of the 30S subunit body where it stabilizes the conformation of the head with respect to the body. This is Small ribosomal subunit protein uS5 from Micrococcus luteus (Micrococcus lysodeikticus).